An 800-amino-acid chain; its full sequence is Phenylalanine--tRNA ligase beta subunit (800 aa).

Residues 39–154 form the tRNA-binding domain; that stretch reads TKDIKNLVVG…ESQVPGTDAL (116 aa). Residues 408-483 form the B5 domain; that stretch reads AFITPIDITA…RIYGYDDIPS (76 aa). The Mg(2+) site is built by aspartate 461, aspartate 467, glutamate 470, and glutamate 471. The region spanning 708 to 800 is the FDX-ACB domain; it reads PRFPGMSRDI…ALIEQGAVIR (93 aa).

The protein belongs to the phenylalanyl-tRNA synthetase beta subunit family. Type 1 subfamily. Tetramer of two alpha and two beta subunits. It depends on Mg(2+) as a cofactor.

It localises to the cytoplasm. The catalysed reaction is tRNA(Phe) + L-phenylalanine + ATP = L-phenylalanyl-tRNA(Phe) + AMP + diphosphate + H(+). The chain is Phenylalanine--tRNA ligase beta subunit from Staphylococcus aureus (strain MSSA476).